A 321-amino-acid chain; its full sequence is Acetyl-coenzyme A carboxylase carboxyl transferase subunit beta, chloroplastic (321 aa).

The CoA carboxyltransferase N-terminal domain maps to 47-321; it reads LWAQCDNCEN…FWFYVLRSSL (275 aa). Zn(2+) contacts are provided by C51, C54, C70, and C73. A C4-type zinc finger spans residues 51–73; that stretch reads CDNCENLLYLRFLRENQSVCKEC.

It belongs to the AccD/PCCB family. Acetyl-CoA carboxylase is a heterohexamer composed of biotin carboxyl carrier protein, biotin carboxylase and 2 subunits each of ACCase subunit alpha and ACCase plastid-coded subunit beta (accD). It depends on Zn(2+) as a cofactor.

It localises to the plastid. The protein resides in the chloroplast stroma. It carries out the reaction N(6)-carboxybiotinyl-L-lysyl-[protein] + acetyl-CoA = N(6)-biotinyl-L-lysyl-[protein] + malonyl-CoA. It functions in the pathway lipid metabolism; malonyl-CoA biosynthesis; malonyl-CoA from acetyl-CoA: step 1/1. In terms of biological role, component of the acetyl coenzyme A carboxylase (ACC) complex. Biotin carboxylase (BC) catalyzes the carboxylation of biotin on its carrier protein (BCCP) and then the CO(2) group is transferred by the transcarboxylase to acetyl-CoA to form malonyl-CoA. In Pinus thunbergii (Japanese black pine), this protein is Acetyl-coenzyme A carboxylase carboxyl transferase subunit beta, chloroplastic.